Reading from the N-terminus, the 105-residue chain is Toxin ParE2 (105 aa).

This sequence belongs to the RelE toxin family.

In terms of biological role, toxic component of a type II toxin-antitoxin (TA) system. Its toxic effect is neutralized by coexpression with cognate antitoxin ParD2. The polypeptide is Toxin ParE2 (parE2) (Mycobacterium tuberculosis (strain CDC 1551 / Oshkosh)).